Here is an 80-residue protein sequence, read N- to C-terminus: Putative antitoxin VapB44 (80 aa).

Residues 40-68 (NQNPQPAASQEDAFHGFEPLPHRGGAVSN) form a disordered region.

Possibly the antitoxin component of a type II toxin-antitoxin (TA) system. Its cognate toxin is VapC44 (Potential). This chain is Putative antitoxin VapB44 (vapB44), found in Mycobacterium tuberculosis (strain CDC 1551 / Oshkosh).